We begin with the raw amino-acid sequence, 1271 residues long: Protein flightless-1 homolog (1271 aa).

N-acetylmethionine is present on Met1. The interval 1–427 is interaction with LRRFIP1 and LRRFIP2; sequence MEATGVLPFV…SGSKDPLARK (427 aa). 16 LRR repeats span residues 7 to 32, 33 to 55, 56 to 78, 80 to 103, 104 to 126, 127 to 149, 150 to 173, 175 to 196, 197 to 222, 223 to 245, 247 to 268, 269 to 291, 293 to 316, 317 to 339, 340 to 363, and 365 to 385; these read LPFV…VKAM, TSLR…LAAL, QKLE…LSSL, SLRA…IFKL, DDLS…LENA, KNML…LFIN, LTDL…MRRL, HLQT…QLPA, MMAL…LEGL, SNLS…LYTL, SLRR…IDQW, VHLE…ICKL, KLKK…IGKL, TSLE…LCRC, PKLK…HFLT, and IQVL…PADR. Residue Lys21 is modified to N6-acetyllysine. Ser406 carries the phosphoserine modification. At Ser436 the chain carries Phosphoserine; by SGK3. Residues 495–827 form an interaction with ACTL6A region; that stretch reads VGQLPGLTIW…VVSRSLEGTE (333 aa). Gelsolin-like repeat units follow at residues 509–591, 629–703, and 759–831; these read FVPV…EEFL, NIKL…PGFW, and LMPG…AQVF. Ser860 carries the phosphoserine modification. The segment at 951 to 977 is disordered; it reads KTEDKEGKASAEAREGEEAAAEAEEKQ. The segment covering 952-967 has biased composition (basic and acidic residues); it reads TEDKEGKASAEAREGE. Positions 968–977 are enriched in acidic residues; sequence EAAAEAEEKQ. Residues 1183–1256 form a Gelsolin-like 4 repeat; that stretch reads KCSDFCQDDL…VRKGNEQRAF (74 aa).

In terms of assembly, interacts with actin, ACTL6A and NCOA2. Interacts with CARM1. Interacts with LRRFIP1, LRRFIP2 and MYD88. Upon LPS stimulation, LRRFIP2 competes for MYD88-binding; LRRFIP1 constitutively blocks the interaction with MyD88, even in the absence of LPS. Interacts with the nuclear receptors ESR1 and THRB. Interacts with SGK3. Interacts (via the gelsolin-like region) with TMOD1 and TMOD3. Interacts with LMOD2, VCL, GSN and DES. Expressed in blastocyst.

Its subcellular location is the nucleus. It is found in the cytoplasm. It localises to the cytoskeleton. The protein localises to the microtubule organizing center. The protein resides in the centrosome. Its subcellular location is the cell junction. It is found in the focal adhesion. It localises to the cell projection. The protein localises to the podosome. Is a regulator of actin polymerization, required for proper myofibril organization and regulation of the length of sarcomeric thin filaments. It also plays a role in the assembly of cardiomyocyte cell adhesion complexes. Regulates cytoskeletal rearrangements involved in cytokinesis and cell migration, by inhibiting Rac1-dependent paxillin phosphorylation. May play a role as coactivator in transcriptional activation by hormone-activated nuclear receptors (NR) and acts in cooperation with NCOA2 and CARM1. Involved in estrogen hormone signaling. This is Protein flightless-1 homolog (Flii) from Mus musculus (Mouse).